A 427-amino-acid chain; its full sequence is Peptidase B (427 aa).

Mn(2+)-binding residues include K195 and D200. K207 is an active-site residue. Residues D218, D277, and E279 each coordinate Mn(2+). Residue R281 is part of the active site.

Belongs to the peptidase M17 family. Homohexamer. It depends on Mn(2+) as a cofactor.

It localises to the cytoplasm. It catalyses the reaction Release of an N-terminal amino acid, Xaa, from a peptide or arylamide. Xaa is preferably Glu or Asp but may be other amino acids, including Leu, Met, His, Cys and Gln.. Functionally, probably plays an important role in intracellular peptide degradation. This chain is Peptidase B, found in Escherichia coli (strain SE11).